Reading from the N-terminus, the 270-residue chain is Formamidopyrimidine-DNA glycosylase (270 aa).

Proline 2 functions as the Schiff-base intermediate with DNA in the catalytic mechanism. The active-site Proton donor is the glutamate 3. The active-site Proton donor; for beta-elimination activity is the lysine 58. 3 residues coordinate DNA: histidine 91, arginine 109, and arginine 151. The segment at 236 to 270 (QVYGKTGQQCPSCETPLKAVKLAARASVYCPECQS) adopts an FPG-type zinc-finger fold. Arginine 260 (proton donor; for delta-elimination activity) is an active-site residue.

Belongs to the FPG family. In terms of assembly, monomer. Requires Zn(2+) as cofactor.

It catalyses the reaction Hydrolysis of DNA containing ring-opened 7-methylguanine residues, releasing 2,6-diamino-4-hydroxy-5-(N-methyl)formamidopyrimidine.. It carries out the reaction 2'-deoxyribonucleotide-(2'-deoxyribose 5'-phosphate)-2'-deoxyribonucleotide-DNA = a 3'-end 2'-deoxyribonucleotide-(2,3-dehydro-2,3-deoxyribose 5'-phosphate)-DNA + a 5'-end 5'-phospho-2'-deoxyribonucleoside-DNA + H(+). Involved in base excision repair of DNA damaged by oxidation or by mutagenic agents. Acts as a DNA glycosylase that recognizes and removes damaged bases. Has a preference for oxidized purines, such as 7,8-dihydro-8-oxoguanine (8-oxoG). Has AP (apurinic/apyrimidinic) lyase activity and introduces nicks in the DNA strand. Cleaves the DNA backbone by beta-delta elimination to generate a single-strand break at the site of the removed base with both 3'- and 5'-phosphates. In Psychromonas ingrahamii (strain DSM 17664 / CCUG 51855 / 37), this protein is Formamidopyrimidine-DNA glycosylase.